Consider the following 747-residue polypeptide: Transcription factor phm2 (747 aa).

A DNA-binding region (zn(2)-C6 fungal-type) is located at residues 21–50; that stretch reads CNACRKRKRVRCDRLHPCSNCASRGLGSTC. Disordered regions lie at residues 112–150 and 414–436; these read GLQN…DHGS and TAEP…PESR.

It localises to the nucleus. Transcription factor that regulates the expression of the gene cluster that mediates the biosynthesis of the trans-fused decalin-containing tetramic acid phomasetin. This chain is Transcription factor phm2, found in Pyrenochaetopsis sp.